We begin with the raw amino-acid sequence, 183 residues long: Capsid protein (183 aa).

A disordered region spans residues Asn136 to Cys183. The segment covering Val149–Ser176 has biased composition (basic residues). A phosphoserine; by host mark is found at Ser155, Ser162, and Ser170. The 1; half-length repeat unit spans residues Ser155–Pro161. The segment at Ser155–Gln177 is 3 X 8 AA repeats of S-P-R-R-R-[PR]-S-Q. The Bipartite nuclear localization signal signature appears at Arg158–Arg175. 2 tandem repeats follow at residues Ser162–Gln169 and Ser170–Gln177. The interval Gln177–Cys183 is RNA binding.

It belongs to the orthohepadnavirus core antigen family. In terms of assembly, homodimerizes, then multimerizes. Interacts with cytosol exposed regions of viral L glycoprotein present in the reticulum-to-Golgi compartment. Interacts with human FLNB. Phosphorylated form interacts with host importin alpha; this interaction depends on the exposure of the NLS, which itself depends upon genome maturation and/or phosphorylation of the capsid protein. Interacts with host NUP153. Post-translationally, phosphorylated by host SRPK1, SRPK2, and maybe protein kinase C or GAPDH. Phosphorylation is critical for pregenomic RNA packaging. Protein kinase C phosphorylation is stimulated by HBx protein and may play a role in transport of the viral genome to the nucleus at the late step during the viral replication cycle.

It localises to the virion. The protein localises to the host cytoplasm. Self assembles to form an icosahedral capsid. Most capsids appear to be large particles with an icosahedral symmetry of T=4 and consist of 240 copies of capsid protein, though a fraction forms smaller T=3 particles consisting of 180 capsid proteins. Entering capsids are transported along microtubules to the nucleus. Phosphorylation of the capsid is thought to induce exposure of nuclear localization signal in the C-terminal portion of the capsid protein that allows binding to the nuclear pore complex via the importin (karyopherin-) alpha and beta. Capsids are imported in intact form through the nuclear pore into the nuclear basket, where it probably binds NUP153. Only capsids that contain the mature viral genome can release the viral DNA and capsid protein into the nucleoplasm. Immature capsids get stuck in the basket. Capsids encapsulate the pre-genomic RNA and the P protein. Pre-genomic RNA is reverse-transcribed into DNA while the capsid is still in the cytoplasm. The capsid can then either be directed to the nucleus, providing more genomes for transcription, or bud through the endoplasmic reticulum to provide new virions. This is Capsid protein from Homo sapiens (Human).